Consider the following 490-residue polypeptide: Protoporphyrinogen oxidase (490 aa).

FAD contacts are provided by residues 7–12 (GGGIAG), 32–33 (EK), tryptophan 40, 61–64 (GPRT), and 466–468 (VSI).

Belongs to the protoporphyrinogen/coproporphyrinogen oxidase family. Protoporphyrinogen oxidase subfamily. FAD serves as cofactor.

Its subcellular location is the mitochondrion. The enzyme catalyses protoporphyrinogen IX + 3 O2 = protoporphyrin IX + 3 H2O2. It functions in the pathway porphyrin-containing compound metabolism; protoporphyrin-IX biosynthesis; protoporphyrin-IX from protoporphyrinogen-IX: step 1/1. Catalyzes the 6-electron oxidation of protoporphyrinogen-IX to form protoporphyrin-IX. The sequence is that of Protoporphyrinogen oxidase (hem14) from Schizosaccharomyces pombe (strain 972 / ATCC 24843) (Fission yeast).